The following is a 108-amino-acid chain: ADM5 (108 aa).

Residues 1-18 (MTAHILLLWLFASSILGD) form the signal peptide. Residues 19–25 (PDSAGRL) constitute a propeptide that is removed on maturation. Cysteine 38 and cysteine 43 are joined by a disulfide. Residues 61 to 108 (KELSGKAGRKPQDPYSYGRRRRRRRRRREARLLRRLQDPSLRRAQLAG) are disordered. Tyrosine amide is present on tyrosine 77. Over residues 78-89 (GRRRRRRRRRRE) the composition is skewed to basic residues. Positions 89-108 (EARLLRRLQDPSLRRAQLAG) are excised as a propeptide. A compositionally biased stretch (basic and acidic residues) spans 90 to 101 (ARLLRRLQDPSL).

This sequence belongs to the adrenomedullin family. As to expression, expressed abundantly in the spleen and thymus. Also expressed in adrenal and pituitary. Not expressed in brain, heart, kidney, liver and stomach.

It is found in the secreted. Seems to have a peripheral vasodepressor effect and a central vasopressor effect. This chain is ADM5 (ADM5), found in Sus scrofa (Pig).